A 507-amino-acid polypeptide reads, in one-letter code: ATP synthase subunit alpha, chloroplastic (507 aa).

170-177 (GDRQTGKT) is a binding site for ATP.

Belongs to the ATPase alpha/beta chains family. In terms of assembly, F-type ATPases have 2 components, CF(1) - the catalytic core - and CF(0) - the membrane proton channel. CF(1) has five subunits: alpha(3), beta(3), gamma(1), delta(1), epsilon(1). CF(0) has four main subunits: a, b, b' and c.

The protein resides in the plastid. The protein localises to the chloroplast thylakoid membrane. The catalysed reaction is ATP + H2O + 4 H(+)(in) = ADP + phosphate + 5 H(+)(out). Produces ATP from ADP in the presence of a proton gradient across the membrane. The alpha chain is a regulatory subunit. The chain is ATP synthase subunit alpha, chloroplastic from Silene latifolia (White campion).